A 152-amino-acid polypeptide reads, in one-letter code: Ribosome maturation factor RimP (152 aa).

This sequence belongs to the RimP family.

It localises to the cytoplasm. Its function is as follows. Required for maturation of 30S ribosomal subunits. In Pseudoalteromonas atlantica (strain T6c / ATCC BAA-1087), this protein is Ribosome maturation factor RimP.